The sequence spans 609 residues: Glutamine--fructose-6-phosphate aminotransferase [isomerizing] (609 aa).

The active-site Nucleophile; for GATase activity is the C2. Residues 2–218 enclose the Glutamine amidotransferase type-2 domain; it reads CGIVGAIAQR…EGDIAEITRR (217 aa). SIS domains lie at 286-426 and 458-599; these read ADEL…LKGL and LAED…VDQP. The For Fru-6P isomerization activity role is filled by K604.

Homodimer.

It is found in the cytoplasm. The catalysed reaction is D-fructose 6-phosphate + L-glutamine = D-glucosamine 6-phosphate + L-glutamate. In terms of biological role, catalyzes the first step in hexosamine metabolism, converting fructose-6P into glucosamine-6P using glutamine as a nitrogen source. This is Glutamine--fructose-6-phosphate aminotransferase [isomerizing] from Salmonella paratyphi A (strain ATCC 9150 / SARB42).